Consider the following 509-residue polypeptide: Cytochrome P450 monooxygenase ORF9 (509 aa).

The next 2 helical transmembrane spans lie at 20–40 (IYVL…GLIV) and 309–329 (LIIA…YYLL). Asparagine 353 carries an N-linked (GlcNAc...) asparagine glycan. Cysteine 448 is a binding site for heme.

The protein belongs to the cytochrome P450 family. Heme serves as cofactor.

Its subcellular location is the membrane. It participates in sesquiterpene biosynthesis. Functionally, cytochrome P450 monooxygenase; part of the gene cluster that mediates the biosynthesis of PR-toxin, a bicyclic sesquiterpene belonging to the eremophilane class and acting as a mycotoxin. The first step of the pathway is catalyzed by the aristolochene synthase which performs the cyclization of trans,trans-farnesyl diphosphate (FPP) to the bicyclic sesquiterpene aristolochene. Following the formation of aristolochene, the non-oxygenated aristolochene is converted to the trioxygenated intermediate eremofortin B, via 7-epi-neopetasone. This conversion appears to involve three enzymes, a hydroxysterol oxidase-like enzyme, the quinone-oxidase prx3 that forms the quinone-type-structure in the bicyclic nucleus of aristolochene with the C8-oxo group and the C-3 hydroxyl group, and the P450 monooxygenase ORF6 that introduces the epoxide at the double bond between carbons 1 and 2. No monoxy or dioxy-intermediates have been reported to be released to the broth, so these three early oxidative reactions may be coupled together. Eremofortin B is further oxidized by another P450 monooxygenase, that introduces a second epoxide between carbons 7 and 11 prior to acetylation to eremofortin A by the acetyltransferase ORF8. The second epoxidation may be performed by a second P450 monooxygenase. After the acetylation step, eremofortin A is converted to eremofortin C and then to PR-toxin. First the conversion of eremofortin A to eremofortin C proceeds by oxidation of the side chain of the molecule at C-12 and is catalyzed by the short-chain oxidoreductase prx1. The cytochrome P450 monooxygenase ORF6 is probably also involved in this step. The primary alcohol formed at C-12 is finally oxidized by the short-chain alcohol dehydrogenase prx4 that forms PR-toxin. In Penicillium roqueforti (strain FM164), this protein is Cytochrome P450 monooxygenase ORF9.